Consider the following 371-residue polypeptide: MSL complex subunit 3B (371 aa).

Disordered regions lie at residues 1-44 (MATL…READ) and 160-229 (EERA…SPQA). The span at 8–44 (PKDDGEGKDEGGSDRGDGDPKPKGKKEVEAHTRREAD) shows a compositional bias: basic and acidic residues. One can recognise an MRG domain in the interval 44–367 (DERAVRIPIP…CEAHYSSKNP (324 aa)). A compositionally biased stretch (basic residues) spans 206-216 (APRRSTRHSTH).

It is found in the nucleus. Probable non-catalytic component of the MSL histone acetyltransferase complex, a multiprotein complex that mediates the majority of histone H4 acetylation at 'Lys-16' (H4K16ac), an epigenetic mark that prevents chromatin compaction. The chain is MSL complex subunit 3B from Rattus norvegicus (Rat).